The sequence spans 247 residues: 2,3-bisphosphoglycerate-dependent phosphoglycerate mutase (247 aa).

Residues 8 to 15, 21 to 22, Arg60, 87 to 90, Lys98, 114 to 115, and 183 to 184 contribute to the substrate site; these read RHGESTWN, TG, ERHY, RR, and GN. The active-site Tele-phosphohistidine intermediate is His9. The Proton donor/acceptor role is filled by Glu87.

This sequence belongs to the phosphoglycerate mutase family. BPG-dependent PGAM subfamily. Homodimer.

It carries out the reaction (2R)-2-phosphoglycerate = (2R)-3-phosphoglycerate. The protein operates within carbohydrate degradation; glycolysis; pyruvate from D-glyceraldehyde 3-phosphate: step 3/5. Its function is as follows. Catalyzes the interconversion of 2-phosphoglycerate and 3-phosphoglycerate. The protein is 2,3-bisphosphoglycerate-dependent phosphoglycerate mutase of Paracidovorax citrulli (strain AAC00-1) (Acidovorax citrulli).